We begin with the raw amino-acid sequence, 445 residues long: Bifunctional protein GlmU (445 aa).

The tract at residues 1 to 218 (MRALVLAAGK…LLEITGVNTR (218 aa)) is pyrophosphorylase. UDP-N-acetyl-alpha-D-glucosamine-binding positions include 6–9 (LAAG), lysine 20, glutamine 69, 74–75 (GT), 96–98 (YGD), glycine 134, glutamate 147, asparagine 162, and asparagine 216. Aspartate 98 lines the Mg(2+) pocket. Asparagine 216 serves as a coordination point for Mg(2+). Residues 219-239 (KTLVWLEEQLRMRKIEELLEN) form a linker region. The tract at residues 240 to 445 (GVTILDPATT…GWVLKKRKEE (206 aa)) is N-acetyltransferase. The UDP-N-acetyl-alpha-D-glucosamine site is built by arginine 321 and lysine 339. The Proton acceptor role is filled by histidine 351. UDP-N-acetyl-alpha-D-glucosamine-binding residues include tyrosine 354 and asparagine 365. Residues alanine 368, 374–375 (NY), serine 393, alanine 411, and arginine 428 each bind acetyl-CoA.

The protein in the N-terminal section; belongs to the N-acetylglucosamine-1-phosphate uridyltransferase family. This sequence in the C-terminal section; belongs to the transferase hexapeptide repeat family. As to quaternary structure, homotrimer. It depends on Mg(2+) as a cofactor.

The protein resides in the cytoplasm. It catalyses the reaction alpha-D-glucosamine 1-phosphate + acetyl-CoA = N-acetyl-alpha-D-glucosamine 1-phosphate + CoA + H(+). The enzyme catalyses N-acetyl-alpha-D-glucosamine 1-phosphate + UTP + H(+) = UDP-N-acetyl-alpha-D-glucosamine + diphosphate. Its pathway is nucleotide-sugar biosynthesis; UDP-N-acetyl-alpha-D-glucosamine biosynthesis; N-acetyl-alpha-D-glucosamine 1-phosphate from alpha-D-glucosamine 6-phosphate (route II): step 2/2. The protein operates within nucleotide-sugar biosynthesis; UDP-N-acetyl-alpha-D-glucosamine biosynthesis; UDP-N-acetyl-alpha-D-glucosamine from N-acetyl-alpha-D-glucosamine 1-phosphate: step 1/1. It participates in bacterial outer membrane biogenesis; LPS lipid A biosynthesis. Catalyzes the last two sequential reactions in the de novo biosynthetic pathway for UDP-N-acetylglucosamine (UDP-GlcNAc). The C-terminal domain catalyzes the transfer of acetyl group from acetyl coenzyme A to glucosamine-1-phosphate (GlcN-1-P) to produce N-acetylglucosamine-1-phosphate (GlcNAc-1-P), which is converted into UDP-GlcNAc by the transfer of uridine 5-monophosphate (from uridine 5-triphosphate), a reaction catalyzed by the N-terminal domain. This Thermotoga petrophila (strain ATCC BAA-488 / DSM 13995 / JCM 10881 / RKU-1) protein is Bifunctional protein GlmU.